A 445-amino-acid chain; its full sequence is Phosphoglucosamine mutase (445 aa).

S102 functions as the Phosphoserine intermediate in the catalytic mechanism. 4 residues coordinate Mg(2+): S102, D241, D243, and D245. The residue at position 102 (S102) is a Phosphoserine.

It belongs to the phosphohexose mutase family. The cofactor is Mg(2+). Activated by phosphorylation.

The enzyme catalyses alpha-D-glucosamine 1-phosphate = D-glucosamine 6-phosphate. Its function is as follows. Catalyzes the conversion of glucosamine-6-phosphate to glucosamine-1-phosphate. The protein is Phosphoglucosamine mutase of Acinetobacter baumannii (strain AB0057).